We begin with the raw amino-acid sequence, 160 residues long: SsrA-binding protein (160 aa).

This sequence belongs to the SmpB family.

The protein resides in the cytoplasm. In terms of biological role, required for rescue of stalled ribosomes mediated by trans-translation. Binds to transfer-messenger RNA (tmRNA), required for stable association of tmRNA with ribosomes. tmRNA and SmpB together mimic tRNA shape, replacing the anticodon stem-loop with SmpB. tmRNA is encoded by the ssrA gene; the 2 termini fold to resemble tRNA(Ala) and it encodes a 'tag peptide', a short internal open reading frame. During trans-translation Ala-aminoacylated tmRNA acts like a tRNA, entering the A-site of stalled ribosomes, displacing the stalled mRNA. The ribosome then switches to translate the ORF on the tmRNA; the nascent peptide is terminated with the 'tag peptide' encoded by the tmRNA and targeted for degradation. The ribosome is freed to recommence translation, which seems to be the essential function of trans-translation. This is SsrA-binding protein from Enterobacter sp. (strain 638).